The sequence spans 28 residues: Dermaseptin-2.2TR (28 aa).

As to expression, expressed by the skin glands.

It localises to the secreted. Functionally, has antimicrobial activity. This is Dermaseptin-2.2TR from Phyllomedusa trinitatis (Trinidad leaf frog).